Consider the following 530-residue polypeptide: Tetrahydroberberine oxidase (530 aa).

The first 24 residues, 1-24 (MSKMASSIFATFSLLSSLLPTSLA), serve as a signal peptide directing secretion. C36 and C94 are joined by a disulfide. A glycan (N-linked (GlcNAc...) asparagine) is linked at N51. Residues 72–246 (TTPKPNFIVT…LAWKIRLVPV (175 aa)) form the FAD-binding PCMH-type domain. A cross-link (6-(S-cysteinyl)-8alpha-(pros-histidyl)-FAD (His-Cys)) is located at residues 109–171 (HDFEGLSYVS…GVHAFPAGLC (63 aa)). N-linked (GlcNAc...) asparagine glycosylation occurs at N483.

The protein belongs to the oxygen-dependent FAD-linked oxidoreductase family. FAD serves as cofactor. In terms of processing, the FAD cofactor is bound via a bicovalent 6-S-cysteinyl, 8alpha-N1-histidyl FAD linkage.

It carries out the reaction (S)-canadine + 2 O2 + H(+) = berberine + 2 H2O2. Functionally, catalyzes the oxidation of different tetrahydroprotoberberines, such as (S)-canadine, (S)-scoulerine and (S)-corypalmine. Catalyzes the oxidation of (S)-coreximine and (S)-tetrahydropalmatine. Catalyzes the oxidation of different 1-benzylisoquinoline alkaloids, such as (S)-norreticuline, (S)-nororientaline, (S)-coclaurine and (S)-norisoorientaline. Exhibits strict specificity for the (S)-enantiomer of tetrahydroprotoberbirines and 1-benzylisoquinoline alkaloids. In Berberis wilsoniae (Mrs Wilson's barberry), this protein is Tetrahydroberberine oxidase.